We begin with the raw amino-acid sequence, 250 residues long: Cell division protein ZapD (250 aa).

Belongs to the ZapD family. In terms of assembly, interacts with FtsZ.

The protein resides in the cytoplasm. In terms of biological role, cell division factor that enhances FtsZ-ring assembly. Directly interacts with FtsZ and promotes bundling of FtsZ protofilaments, with a reduction in FtsZ GTPase activity. This chain is Cell division protein ZapD, found in Pectobacterium atrosepticum (strain SCRI 1043 / ATCC BAA-672) (Erwinia carotovora subsp. atroseptica).